The following is a 596-amino-acid chain: Transketolase-like protein 1 (596 aa).

Position 46 (His46) interacts with substrate. Residues Ser49 and 94 to 96 (GWL) contribute to the thiamine diphosphate site. Asp126 serves as a coordination point for Mg(2+). Thiamine diphosphate contacts are provided by Gly127 and Asn156. The Mg(2+) site is built by Asn156 and Leu158. 2 residues coordinate thiamine diphosphate: Lys218 and His232. Positions 232, 292, and 319 each coordinate substrate. Glu340 and Phe366 together coordinate thiamine diphosphate. Glu340 serves as the catalytic Proton donor. 2 residues coordinate substrate: His390 and Asp398. Gln402 is a binding site for thiamine diphosphate. Arg448 contributes to the substrate binding site.

Belongs to the transketolase family. In terms of assembly, homodimer. Mg(2+) is required as a cofactor. Requires Ca(2+) as cofactor. Mn(2+) serves as cofactor. It depends on Co(2+) as a cofactor. The cofactor is thiamine diphosphate. Widely expressed. Expressed in endothelial cells and in peripheral neurons (at protein level). As to expression, not expressed in fetal neocortex. In terms of tissue distribution, expressed in fetal neocortex.

It is found in the cytoplasm. The enzyme catalyses D-sedoheptulose 7-phosphate + D-glyceraldehyde 3-phosphate = aldehydo-D-ribose 5-phosphate + D-xylulose 5-phosphate. In terms of biological role, catalyzes the transfer of a two-carbon ketol group from a ketose donor to an aldose acceptor, via a covalent intermediate with the cofactor thiamine pyrophosphate. Functionally, during fetal neocortex development, may be essential to maintain the full number of basal radial glia (bRG). bRG are neural progenitor cells that undergo asymmetric divisions, generating a bRG (self-renewal) and a neuron, in contrast to basal intermediate progenitors (bIPs), which typically divide once to give rise to 2 neurons. bRG generate more cortical neurons over time than bIPs. The chain is Transketolase-like protein 1 (TKTL1) from Homo sapiens (Human).